The sequence spans 651 residues: Bromodomain-containing protein 7 (651 aa).

Lysine 21 is covalently cross-linked (Glycyl lysine isopeptide (Lys-Gly) (interchain with G-Cter in SUMO2)). A compositionally biased stretch (polar residues) spans 35-45 (TELSTGSSGHD). Residues 35–132 (TELSTGSSGH…SSLAKQEEVE (98 aa)) form a disordered region. Positions 47 to 57 (SLFEDKNDHDK) are enriched in basic and acidic residues. Residue lysine 52 forms a Glycyl lysine isopeptide (Lys-Gly) (interchain with G-Cter in SUMO2) linkage. The segment covering 58-69 (HKDRKRKKRKKG) has biased composition (basic residues). A Nuclear localization signal motif is present at residues 65-96 (KRKKGEKQIPGEEKGRKRRRVKEDKKKRDRDR). A compositionally biased stretch (basic and acidic residues) spans 70-106 (EKQIPGEEKGRKRRRVKEDKKKRDRDRVENEAEKDLQ). Glycyl lysine isopeptide (Lys-Gly) (interchain with G-Cter in SUMO2) cross-links involve residues lysine 127, lysine 186, lysine 197, lysine 201, lysine 212, and lysine 241. Positions 131-235 (VEQTPLQEAL…HSGMKILSQE (105 aa)) constitute a Bromo domain. The segment at 253-301 (TRKQKDGTDTSQSGEDGGCWQREREDSGDAEAHAFKSPSKENKKKDKDM) is disordered. Basic and acidic residues predominate over residues 273–301 (QREREDSGDAEAHAFKSPSKENKKKDKDM). 2 positions are modified to phosphoserine: serine 279 and serine 289. Residues lysine 305 and lysine 307 each participate in a glycyl lysine isopeptide (Lys-Gly) (interchain with G-Cter in SUMO2) cross-link. Lysine 328 carries the N6-acetyllysine modification. Residue lysine 344 forms a Glycyl lysine isopeptide (Lys-Gly) (interchain with G-Cter in SUMO2) linkage. Position 380 is a phosphoserine (serine 380). Lysine 389 participates in a covalent cross-link: Glycyl lysine isopeptide (Lys-Gly) (interchain with G-Cter in SUMO2). Serine 482 is modified (phosphoserine). The residue at position 514 (threonine 514) is a Phosphothreonine. The stretch at 536-567 (SEEAEIFQKKLDETTRLLRELQEAQNERLSTR) forms a coiled coil. At serine 621 the chain carries Phosphoserine.

In terms of assembly, interacts with TRIM24, PTPN13 and DVL1. Identified in a complex with SMARCA4/BRG1, SMARCC1/BAF155, SMARCE1/BAF57, DPF2/BAF45D and ARID2, subunits of the SWI/SNF-B (PBAF) chromatin remodeling complex. Interacts with IRF2 and HNRPUL1. Interacts (via N-terminus) with TP53. Interacts (via C-terminus) with EP300. Interacts with BRCA1. Interacts (via bromo domain) with histone H3 (via N-terminus) acetylated at 'Lys-14' (H3K14ac). Has low affinity for histone H3 acetylated at 'Lys-9' (H3K9ac). Has the highest affinity for histone H3 that is acetylated both at 'Lys-9' (H3K9ac) and at 'Lys-14' (H3K14ac). Has very low affinity for non-acetylated histone H3. Interacts (via bromo domain) with histone H4 (via N-terminus) acetylated at 'Lys-8' (H3K8ac) (in vitro).

It is found in the nucleus. It localises to the chromosome. Its function is as follows. Acts both as coactivator and as corepressor. May play a role in chromatin remodeling. Activator of the Wnt signaling pathway in a DVL1-dependent manner by negatively regulating the GSK3B phosphotransferase activity. Induces dephosphorylation of GSK3B at 'Tyr-216'. Down-regulates TRIM24-mediated activation of transcriptional activation by AR. Transcriptional corepressor that down-regulates the expression of target genes. Binds to target promoters, leading to increased histone H3 acetylation at 'Lys-9' (H3K9ac). Binds to the ESR1 promoter. Recruits BRCA1 and POU2F1 to the ESR1 promoter. Coactivator for TP53-mediated activation of transcription of a set of target genes. Required for TP53-mediated cell-cycle arrest in response to oncogene activation. Promotes acetylation of TP53 at 'Lys-382', and thereby promotes efficient recruitment of TP53 to target promoters. Inhibits cell cycle progression from G1 to S phase. This chain is Bromodomain-containing protein 7 (BRD7), found in Homo sapiens (Human).